A 193-amino-acid chain; its full sequence is 3-isopropylmalate dehydratase small subunit (193 aa).

It belongs to the LeuD family. LeuD type 1 subfamily. Heterodimer of LeuC and LeuD.

It carries out the reaction (2R,3S)-3-isopropylmalate = (2S)-2-isopropylmalate. The protein operates within amino-acid biosynthesis; L-leucine biosynthesis; L-leucine from 3-methyl-2-oxobutanoate: step 2/4. In terms of biological role, catalyzes the isomerization between 2-isopropylmalate and 3-isopropylmalate, via the formation of 2-isopropylmaleate. The sequence is that of 3-isopropylmalate dehydratase small subunit from Listeria monocytogenes serovar 1/2a (strain ATCC BAA-679 / EGD-e).